We begin with the raw amino-acid sequence, 304 residues long: METVPPAVDLVLGASACCLACVFTNPLEVVKTRLQLQGELQKRGTYPRLYRGFVASVVAVVRADGLCGLQKGLAAGLLYQGLMNGVRFYCYSLACQAGLSQQPGGTVVAGAVAGALGAFVGSPAYLVKTQLQAQTVAAMAVGHQHHHESLLGALETIWRQQGLAGLWRGVGGAVPRVMVGSAAQLATFASAKAWVQERQWLPEDSWLVALAGGMISSIAVVAVMTPFDVVSTRLYNQPVDGAGRGKLYGGLTDCLVKIWRQEGPLALYKGLGPVYLRLGPHTILSMLFWDELRKLAGWGQHQGS.

3 Solcar repeats span residues 4–97 (VPPA…ACQA), 101–194 (QQPG…AKAW), and 204–295 (DSWL…LRKL). Transmembrane regions (helical) follow at residues 7 to 27 (AVDL…TNPL), 45 to 65 (TYPR…RADG), 98 to 120 (GLSQ…GAFV), 170 to 191 (VGGA…FASA), 206 to 226 (WLVA…VMTP), and 278 to 301 (LGPH…WGQH).

Belongs to the mitochondrial carrier (TC 2.A.29) family.

The protein resides in the mitochondrion inner membrane. It catalyses the reaction a dicarboxylate(in) + sulfate(out) = a dicarboxylate(out) + sulfate(in). Functionally, putative antiporter that exchanges dicarboxylates and sulfur oxoanions across the inner membrane of mitochondria. This chain is Solute carrier family 25 member 34 (SLC25A34), found in Bos taurus (Bovine).